We begin with the raw amino-acid sequence, 193 residues long: Probable thymidylate kinase (193 aa).

Position 7–14 (7–14 (GIDGSGKT)) interacts with ATP.

Belongs to the thymidylate kinase family.

The catalysed reaction is dTMP + ATP = dTDP + ADP. The sequence is that of Probable thymidylate kinase from Pyrobaculum calidifontis (strain DSM 21063 / JCM 11548 / VA1).